A 166-amino-acid chain; its full sequence is NAD(P)H-quinone oxidoreductase subunit I, chloroplastic (166 aa).

2 4Fe-4S ferredoxin-type domains span residues 55–84 (GRIHFEFDKCIACEVCVRVCPIDLPVVDWK) and 95–124 (LNYSIDFGICIFCGNCVEYCPTNCLSMTEE). [4Fe-4S] cluster is bound by residues Cys-64, Cys-67, Cys-70, Cys-74, Cys-104, Cys-107, Cys-110, and Cys-114.

The protein belongs to the complex I 23 kDa subunit family. In terms of assembly, NDH is composed of at least 16 different subunits, 5 of which are encoded in the nucleus. It depends on [4Fe-4S] cluster as a cofactor.

It is found in the plastid. The protein resides in the chloroplast thylakoid membrane. It carries out the reaction a plastoquinone + NADH + (n+1) H(+)(in) = a plastoquinol + NAD(+) + n H(+)(out). The catalysed reaction is a plastoquinone + NADPH + (n+1) H(+)(in) = a plastoquinol + NADP(+) + n H(+)(out). NDH shuttles electrons from NAD(P)H:plastoquinone, via FMN and iron-sulfur (Fe-S) centers, to quinones in the photosynthetic chain and possibly in a chloroplast respiratory chain. The immediate electron acceptor for the enzyme in this species is believed to be plastoquinone. Couples the redox reaction to proton translocation, and thus conserves the redox energy in a proton gradient. The sequence is that of NAD(P)H-quinone oxidoreductase subunit I, chloroplastic from Bahiopsis tomentosa (Tecote).